Consider the following 306-residue polypeptide: Armadillo repeat-containing protein 10 (306 aa).

A helical membrane pass occupies residues 7 to 29 (VGWVAAGLVLGAGACYCIYRLTR). Phosphoserine is present on serine 43. Threonine 48 is subject to Phosphothreonine. The stretch at 101 to 143 (GGIPIVGNKINSLNQSIKEKALNALNNLSVNVENQTKIKIYVP) is one ARM repeat.

As to quaternary structure, interacts with the DNA-binding domain of p53/TP53.

It is found in the endoplasmic reticulum membrane. The protein resides in the mitochondrion outer membrane. May play a role in cell survival and cell growth. May suppress the transcriptional activity of p53/TP53. In Mus musculus (Mouse), this protein is Armadillo repeat-containing protein 10 (Armc10).